A 1335-amino-acid polypeptide reads, in one-letter code: Bifunctional autolysin (1335 aa).

Positions 1-29 (MAKKFNYKLPSMVALTLFGTAFTAHQANA) are cleaved as a signal peptide. Disordered regions lie at residues 51 to 88 (QAEK…QSTT), 100 to 262 (NEIS…KYKE), and 514 to 535 (WGTT…NNKL). Polar residues-rich tracts occupy residues 58-88 (EVTQ…QSTT), 100-127 (NEIS…VTKN), 143-155 (TDTN…QSVA), 176-223 (TASQ…NASG), and 244-258 (SLNN…TTSY). The N-acetylmuramoyl-L-alanine amidase stretch occupies residues 303 to 863 (VSSQKTSSLP…LSTQSTPAPK (561 aa)). The span at 515 to 531 (GTTSTKPSQPSKPSGGT) shows a compositional bias: low complexity. 7 GW domains span residues 533–610 (NKLT…YNTA), 612–686 (APVK…TASK), 700–774 (TVTN…YNTA), 776–850 (SPVK…APSK), 868–943 (STQT…TQNI), 945–1020 (KQTQ…QNST), and 1023–1096 (QSTP…KEKI). The interval 864–1335 (QVKPSTQTVN…GKYFEIPIYK (472 aa)) is endo-beta-N-acetylglucosaminidase.

This sequence in the N-terminal section; belongs to the N-acetylmuramoyl-L-alanine amidase 2 family. It in the C-terminal section; belongs to the glycosyl hydrolase 73 family. As to quaternary structure, oligomer; forms a ring structure at the cell surface which is important for efficient partitioning of daughter cells after cell division. In terms of processing, undergoes proteolytic processing to generate the two extracellular lytic enzymes, probably at the septal region on the cell surface.

The protein localises to the secreted. The catalysed reaction is Hydrolyzes the link between N-acetylmuramoyl residues and L-amino acid residues in certain cell-wall glycopeptides.. It catalyses the reaction an N(4)-(oligosaccharide-(1-&gt;3)-[oligosaccharide-(1-&gt;6)]-beta-D-Man-(1-&gt;4)-beta-D-GlcNAc-(1-&gt;4)-alpha-D-GlcNAc)-L-asparaginyl-[protein] + H2O = an oligosaccharide-(1-&gt;3)-[oligosaccharide-(1-&gt;6)]-beta-D-Man-(1-&gt;4)-D-GlcNAc + N(4)-(N-acetyl-beta-D-glucosaminyl)-L-asparaginyl-[protein]. Endohydrolysis of the di-N-acetylchitobiosyl unit in high-mannose glycopeptides and glycoproteins containing the -[(Man)5(GlcNAc)2]-Asn structure. One N-acetyl-D-glucosamine residue remains attached to the protein; the rest of the oligosaccharide is released intact. Cleaves the peptidoglycan connecting the daughter cells at the end of the cell division cycle, resulting in the separation of the two newly divided cells. Acts as an autolysin in penicillin-induced lysis. The protein is Bifunctional autolysin (atl) of Staphylococcus epidermidis (strain ATCC 12228 / FDA PCI 1200).